A 307-amino-acid polypeptide reads, in one-letter code: Coproporphyrin III ferrochelatase (307 aa).

Fe-coproporphyrin III-binding positions include Tyr12, Arg29, 45–46, Ser53, and Tyr124; that span reads RY. Fe(2+)-binding residues include His181 and Glu263.

This sequence belongs to the ferrochelatase family.

Its subcellular location is the cytoplasm. The enzyme catalyses Fe-coproporphyrin III + 2 H(+) = coproporphyrin III + Fe(2+). Its pathway is porphyrin-containing compound metabolism; protoheme biosynthesis. Its function is as follows. Involved in coproporphyrin-dependent heme b biosynthesis. Catalyzes the insertion of ferrous iron into coproporphyrin III to form Fe-coproporphyrin III. The sequence is that of Coproporphyrin III ferrochelatase from Staphylococcus epidermidis (strain ATCC 35984 / DSM 28319 / BCRC 17069 / CCUG 31568 / BM 3577 / RP62A).